Here is a 166-residue protein sequence, read N- to C-terminus: Phosphopantetheine adenylyltransferase (166 aa).

Position 11 (S11) interacts with substrate. Residues 11–12 and H19 each bind ATP; that span reads SF. 3 residues coordinate substrate: K43, A76, and R90. Residues 91-93, E101, and 126-132 each bind ATP; these read GLR and LQPISSS.

Belongs to the bacterial CoaD family. As to quaternary structure, homohexamer. The cofactor is Mg(2+).

Its subcellular location is the cytoplasm. It catalyses the reaction (R)-4'-phosphopantetheine + ATP + H(+) = 3'-dephospho-CoA + diphosphate. Its pathway is cofactor biosynthesis; coenzyme A biosynthesis; CoA from (R)-pantothenate: step 4/5. In terms of biological role, reversibly transfers an adenylyl group from ATP to 4'-phosphopantetheine, yielding dephospho-CoA (dPCoA) and pyrophosphate. This is Phosphopantetheine adenylyltransferase from Streptococcus equi subsp. zooepidemicus (strain H70).